Reading from the N-terminus, the 670-residue chain is Probable Rho-GTPase-activating protein 9 (670 aa).

The 390-residue stretch at 3-392 (DGFSNSFWSR…SFKNLDSLRD (390 aa)) folds into the F-BAR domain. The tract at residues 141–161 (NSKKSNLTDRKPIPTSRKSNK) is disordered. A Rho-GAP domain is found at 425-622 (SSLTEDNLIV…DLINEFENLF (198 aa)). Position 640 is a phosphothreonine (T640). The segment covering 641–663 (PITTSPQKLKLPRSSSPCKNPSP) has biased composition (polar residues). Residues 641-670 (PITTSPQKLKLPRSSSPCKNPSPTRRFRPF) form a disordered region. S645 carries the phosphoserine modification.

The protein resides in the cytoplasm. The polypeptide is Probable Rho-GTPase-activating protein 9 (rga9) (Schizosaccharomyces pombe (strain 972 / ATCC 24843) (Fission yeast)).